We begin with the raw amino-acid sequence, 428 residues long: Enolase 3 (428 aa).

(2R)-2-phosphoglycerate is bound at residue Gln163. The active-site Proton donor is Glu205. Asp242, Glu286, and Asp313 together coordinate Mg(2+). Lys338, Arg367, Ser368, and Lys389 together coordinate (2R)-2-phosphoglycerate. The active-site Proton acceptor is the Lys338.

It belongs to the enolase family. The cofactor is Mg(2+).

The protein localises to the cytoplasm. It is found in the secreted. The protein resides in the cell surface. The enzyme catalyses (2R)-2-phosphoglycerate = phosphoenolpyruvate + H2O. Its pathway is carbohydrate degradation; glycolysis; pyruvate from D-glyceraldehyde 3-phosphate: step 4/5. Its function is as follows. Catalyzes the reversible conversion of 2-phosphoglycerate (2-PG) into phosphoenolpyruvate (PEP). It is essential for the degradation of carbohydrates via glycolysis. This is Enolase 3 from Lactobacillus johnsonii (strain CNCM I-12250 / La1 / NCC 533).